A 247-amino-acid chain; its full sequence is Retbindin (247 aa).

A signal peptide spans 1 to 31 (MAHEGHSQHSGLVWALRPILAWIFLVACGWS). 4 disulfides stabilise this stretch: Cys99/Cys169, Cys106/Cys146, Cys139/Cys183, and Cys152/Cys165.

This sequence belongs to the folate receptor family. Post-translationally, not N-glycosylated. In terms of tissue distribution, expressed in the peripheral retina where it localizes to the inter-photoreceptor matrix (at protein level). May be produced by rod photoreceptors (at protein level).

The protein localises to the secreted. The protein resides in the extracellular space. Its subcellular location is the extracellular matrix. It localises to the interphotoreceptor matrix. It is found in the cell membrane. In terms of biological role, riboflavin-binding protein which might have a role in retinal flavin transport. In Mus musculus (Mouse), this protein is Retbindin (Rtbdn).